The sequence spans 121 residues: Holo-[acyl-carrier-protein] synthase (121 aa).

Mg(2+) contacts are provided by D8 and E55.

Belongs to the P-Pant transferase superfamily. AcpS family. Requires Mg(2+) as cofactor.

Its subcellular location is the cytoplasm. The enzyme catalyses apo-[ACP] + CoA = holo-[ACP] + adenosine 3',5'-bisphosphate + H(+). Transfers the 4'-phosphopantetheine moiety from coenzyme A to a Ser of acyl-carrier-protein. The protein is Holo-[acyl-carrier-protein] synthase of Caldicellulosiruptor bescii (strain ATCC BAA-1888 / DSM 6725 / KCTC 15123 / Z-1320) (Anaerocellum thermophilum).